Reading from the N-terminus, the 394-residue chain is Elongation factor Tu (394 aa).

One can recognise a tr-type G domain in the interval 10 to 204 (KPHVNVGTIG…AMDDYIPAPE (195 aa)). Residues 19–26 (GHVDHGKT) are G1. 19–26 (GHVDHGKT) lines the GTP pocket. Threonine 26 is a Mg(2+) binding site. Residues 60–64 (GITIN) are G2. A G3 region spans residues 81 to 84 (DCPG). GTP-binding positions include 81 to 85 (DCPGH) and 136 to 139 (NKCD). Residues 136-139 (NKCD) form a G4 region. A G5 region spans residues 174–176 (SAL).

This sequence belongs to the TRAFAC class translation factor GTPase superfamily. Classic translation factor GTPase family. EF-Tu/EF-1A subfamily. In terms of assembly, monomer.

The protein localises to the cytoplasm. The enzyme catalyses GTP + H2O = GDP + phosphate + H(+). Functionally, GTP hydrolase that promotes the GTP-dependent binding of aminoacyl-tRNA to the A-site of ribosomes during protein biosynthesis. In Francisella tularensis subsp. tularensis (strain FSC 198), this protein is Elongation factor Tu.